The sequence spans 131 residues: MKKHGVLNSEIAAILAALGHTDTIVIADCGLPIPDSVKRIDLAVELGKPSFLDVLQVVIEDMAIEKVTVAEEITTNNREIYKEIETRLKEANFEYVLHEEFKEKTKQAKAIIRTGEATPYANIILHAGVIF.

The active-site Proton donor is histidine 20. Substrate contacts are provided by residues aspartate 28, histidine 98, and 120–122; that span reads YAN.

The protein belongs to the RbsD / FucU family. RbsD subfamily. Homodecamer.

It localises to the cytoplasm. The catalysed reaction is beta-D-ribopyranose = beta-D-ribofuranose. Its pathway is carbohydrate metabolism; D-ribose degradation; D-ribose 5-phosphate from beta-D-ribopyranose: step 1/2. In terms of biological role, catalyzes the interconversion of beta-pyran and beta-furan forms of D-ribose. This chain is D-ribose pyranase, found in Bacillus cytotoxicus (strain DSM 22905 / CIP 110041 / 391-98 / NVH 391-98).